The following is a 171-amino-acid chain: tRNA-specific adenosine deaminase (171 aa).

The region spanning 6 to 133 (EEQTYFMQEA…ERLNHRVQVE (128 aa)) is the CMP/dCMP-type deaminase domain. Residue His-57 participates in Zn(2+) binding. Catalysis depends on Glu-59, which acts as the Proton donor. Residues Cys-87 and Cys-90 each contribute to the Zn(2+) site.

Belongs to the cytidine and deoxycytidylate deaminase family. Homodimer. The cofactor is Zn(2+).

It carries out the reaction adenosine(34) in tRNA + H2O + H(+) = inosine(34) in tRNA + NH4(+). Catalyzes the deamination of adenosine to inosine at the wobble position 34 of tRNA(Arg2). In Streptococcus pyogenes serotype M1, this protein is tRNA-specific adenosine deaminase.